We begin with the raw amino-acid sequence, 307 residues long: Elongation factor Ts (307 aa).

The tract at residues Thr79–Val82 is involved in Mg(2+) ion dislocation from EF-Tu.

This sequence belongs to the EF-Ts family.

It localises to the cytoplasm. Functionally, associates with the EF-Tu.GDP complex and induces the exchange of GDP to GTP. It remains bound to the aminoacyl-tRNA.EF-Tu.GTP complex up to the GTP hydrolysis stage on the ribosome. This is Elongation factor Ts from Sinorhizobium fredii (strain NBRC 101917 / NGR234).